Here is a 240-residue protein sequence, read N- to C-terminus: Ribonuclease PH (240 aa).

Phosphate contacts are provided by residues Arg87 and 125–127 (GTR).

Belongs to the RNase PH family. Homohexameric ring arranged as a trimer of dimers.

The catalysed reaction is tRNA(n+1) + phosphate = tRNA(n) + a ribonucleoside 5'-diphosphate. Phosphorolytic 3'-5' exoribonuclease that plays an important role in tRNA 3'-end maturation. Removes nucleotide residues following the 3'-CCA terminus of tRNAs; can also add nucleotides to the ends of RNA molecules by using nucleoside diphosphates as substrates, but this may not be physiologically important. Probably plays a role in initiation of 16S rRNA degradation (leading to ribosome degradation) during starvation. In Pseudomonas syringae pv. tomato (strain ATCC BAA-871 / DC3000), this protein is Ribonuclease PH.